The following is a 406-amino-acid chain: Haptoglobin (406 aa).

A signal peptide spans 1-18; it reads MSALGAVIALLLWGQLFA. Sushi domains follow at residues 31-88 and 90-147; these read DGCP…ECEA. Intrachain disulfides connect Cys-52/Cys-86, Cys-111/Cys-145, Cys-149/Cys-266, Cys-309/Cys-340, and Cys-351/Cys-381. A Peptidase S1 domain is found at 162–404; sequence ILGGHLDAKG…IQDWVQKTIA (243 aa). The N-linked (GlcNAc...) (complex) asparagine glycan is linked to Asn-184. N-linked (GlcNAc...) asparagine glycans are attached at residues Asn-207 and Asn-211. N-linked (GlcNAc...) (complex) asparagine glycosylation occurs at Asn-241. Residues 318 to 323 form an interaction with CD163 region; the sequence is VPEKKT.

Belongs to the peptidase S1 family. Tetramer of two alpha and two beta chains; disulfide-linked. The hemoglobin/haptoglobin complex is composed of a haptoglobin dimer bound to two hemoglobin alpha-beta dimers. Interacts with CD163. Interacts with ERGIC3. In terms of tissue distribution, expressed by the liver and secreted in plasma.

The protein resides in the secreted. In terms of biological role, as a result of hemolysis, hemoglobin is found to accumulate in the kidney and is secreted in the urine. Haptoglobin captures, and combines with free plasma hemoglobin to allow hepatic recycling of heme iron and to prevent kidney damage. Haptoglobin also acts as an antioxidant, has antibacterial activity, and plays a role in modulating many aspects of the acute phase response. Hemoglobin/haptoglobin complexes are rapidly cleared by the macrophage CD163 scavenger receptor expressed on the surface of liver Kupfer cells through an endocytic lysosomal degradation pathway. Its function is as follows. The uncleaved form of allele alpha-2 (2-2), known as zonulin, plays a role in intestinal permeability, allowing intercellular tight junction disassembly, and controlling the equilibrium between tolerance and immunity to non-self antigens. This Homo sapiens (Human) protein is Haptoglobin (HP).